Consider the following 181-residue polypeptide: Protein GrpE (181 aa).

The protein belongs to the GrpE family. In terms of assembly, homodimer.

Its subcellular location is the cytoplasm. Participates actively in the response to hyperosmotic and heat shock by preventing the aggregation of stress-denatured proteins, in association with DnaK and GrpE. It is the nucleotide exchange factor for DnaK and may function as a thermosensor. Unfolded proteins bind initially to DnaJ; upon interaction with the DnaJ-bound protein, DnaK hydrolyzes its bound ATP, resulting in the formation of a stable complex. GrpE releases ADP from DnaK; ATP binding to DnaK triggers the release of the substrate protein, thus completing the reaction cycle. Several rounds of ATP-dependent interactions between DnaJ, DnaK and GrpE are required for fully efficient folding. The sequence is that of Protein GrpE from Leptothrix cholodnii (strain ATCC 51168 / LMG 8142 / SP-6) (Leptothrix discophora (strain SP-6)).